The chain runs to 365 residues: tRNA/tmRNA (uracil-C(5))-methyltransferase (365 aa).

The S-adenosyl-L-methionine site is built by glutamine 189, tyrosine 217, asparagine 222, glutamate 238, and aspartate 298. The active-site Nucleophile is the cysteine 323. The active-site Proton acceptor is the glutamate 357.

This sequence belongs to the class I-like SAM-binding methyltransferase superfamily. RNA M5U methyltransferase family. TrmA subfamily.

The enzyme catalyses uridine(54) in tRNA + S-adenosyl-L-methionine = 5-methyluridine(54) in tRNA + S-adenosyl-L-homocysteine + H(+). It carries out the reaction uridine(341) in tmRNA + S-adenosyl-L-methionine = 5-methyluridine(341) in tmRNA + S-adenosyl-L-homocysteine + H(+). In terms of biological role, dual-specificity methyltransferase that catalyzes the formation of 5-methyluridine at position 54 (m5U54) in all tRNAs, and that of position 341 (m5U341) in tmRNA (transfer-mRNA). The sequence is that of tRNA/tmRNA (uracil-C(5))-methyltransferase from Shewanella woodyi (strain ATCC 51908 / MS32).